Consider the following 189-residue polypeptide: Large ribosomal subunit protein uL5c (189 aa).

Belongs to the universal ribosomal protein uL5 family. Part of the 50S ribosomal subunit; contacts the 5S rRNA.

Its subcellular location is the plastid. The protein resides in the chloroplast. Binds 5S rRNA, forms part of the central protuberance of the 50S subunit. The protein is Large ribosomal subunit protein uL5c (rpl5) of Chara vulgaris (Common stonewort).